A 492-amino-acid chain; its full sequence is FAD-linked oxidoreductase pgmH (492 aa).

Residues 54–224 (SIRLATLVVY…TEFKYRVHKQ (171 aa)) enclose the FAD-binding PCMH-type domain.

Belongs to the oxygen-dependent FAD-linked oxidoreductase family. Requires FAD as cofactor.

Its pathway is pigment biosynthesis. The protein operates within secondary metabolite biosynthesis. Functionally, FAD-linked oxidoreductase; part of the gene cluster that mediates the biosynthesis of pleosporalin A, ascomycone A, as well as a third cryptic naphthoquinone derived pigment, all responsible for the coloration of conidia. Essential for the production of pleosporalin A, but not the 2 other final products. The pathway begins with the biosynthesis of the cyclized heptaketide 3-acetonyl-1,6,8-trihydroxy-2-naphthaldehyde by the NR-PKS pgmA. The C-6 hydroxyl group is further methylated by the O-methyltransferase pgmB to yield fusarubinaldehyde which is in turn oxidized by the cytochrome P450 monooxygenase pgmC at C-9. The C-1 hydroxyl group is then methylated spontaneously. Although pgmE, pgmD and pgmH are essential for the production of pleosporalin A, it is not the case for the 2 other final products and it remains difficult to assign a specific function to each enzyme. PgmF and pgmG seem not to be involved in pigment biosynthesis although they were regulated by the cluster-specific transcription factor pgmR. In Aspergillus terreus, this protein is FAD-linked oxidoreductase pgmH.